Consider the following 227-residue polypeptide: Ion-translocating oxidoreductase complex subunit E (227 aa).

The next 6 membrane-spanning stretches (helical) occupy residues 18-38, 39-59, 69-89, 93-113, 125-145, and 182-202; these read ALVQ…VTNA, LGLG…VSLV, IPVF…LMNA, GLYL…IIIG, LPAV…LVLL, and HFLL…LIAL.

The protein belongs to the NqrDE/RnfAE family. In terms of assembly, the complex is composed of six subunits: RnfA, RnfB, RnfC, RnfD, RnfE and RnfG.

The protein resides in the cell inner membrane. In terms of biological role, part of a membrane-bound complex that couples electron transfer with translocation of ions across the membrane. The sequence is that of Ion-translocating oxidoreductase complex subunit E from Aliivibrio fischeri (strain ATCC 700601 / ES114) (Vibrio fischeri).